The following is a 400-amino-acid chain: Nicotinate phosphoribosyltransferase (400 aa).

H220 is subject to Phosphohistidine; by autocatalysis.

The protein belongs to the NAPRTase family. In terms of processing, transiently phosphorylated on a His residue during the reaction cycle. Phosphorylation strongly increases the affinity for substrates and increases the rate of nicotinate D-ribonucleotide production. Dephosphorylation regenerates the low-affinity form of the enzyme, leading to product release.

It catalyses the reaction nicotinate + 5-phospho-alpha-D-ribose 1-diphosphate + ATP + H2O = nicotinate beta-D-ribonucleotide + ADP + phosphate + diphosphate. Its pathway is cofactor biosynthesis; NAD(+) biosynthesis; nicotinate D-ribonucleotide from nicotinate: step 1/1. Its function is as follows. Catalyzes the synthesis of beta-nicotinate D-ribonucleotide from nicotinate and 5-phospho-D-ribose 1-phosphate at the expense of ATP. The sequence is that of Nicotinate phosphoribosyltransferase from Escherichia coli O127:H6 (strain E2348/69 / EPEC).